The primary structure comprises 68 residues: Cold shock-like protein CspA (68 aa).

In terms of domain architecture, CSD spans 4–64 (GTVKWFNDAK…GPKGLQAQNV (61 aa)).

The protein localises to the cytoplasm. This chain is Cold shock-like protein CspA (cspA), found in Stigmatella aurantiaca (strain DW4/3-1).